The chain runs to 185 residues: Photosystem I assembly protein Ycf4 (185 aa).

The next 2 membrane-spanning stretches (helical) occupy residues 20 to 40 (GNFFWACILFLGSLGFLAVGA) and 57 to 77 (ILFFPQGVVMSFYGIAGLFIS).

Belongs to the Ycf4 family.

Its subcellular location is the plastid. It localises to the chloroplast thylakoid membrane. Seems to be required for the assembly of the photosystem I complex. In Sorghum bicolor (Sorghum), this protein is Photosystem I assembly protein Ycf4.